The chain runs to 180 residues: Cell division protein SepF (180 aa).

Positions 21 to 40 (LDDDYDDGRAVGRDDRRAMH) are disordered. The span at 27–40 (DGRAVGRDDRRAMH) shows a compositional bias: basic and acidic residues.

It belongs to the SepF family. Homodimer. Interacts with FtsZ.

It localises to the cytoplasm. Its function is as follows. Cell division protein that is part of the divisome complex and is recruited early to the Z-ring. Probably stimulates Z-ring formation, perhaps through the cross-linking of FtsZ protofilaments. Its function overlaps with FtsA. The sequence is that of Cell division protein SepF from Frankia casuarinae (strain DSM 45818 / CECT 9043 / HFP020203 / CcI3).